The following is a 131-amino-acid chain: Large ribosomal subunit protein bL17 (131 aa).

This sequence belongs to the bacterial ribosomal protein bL17 family. Part of the 50S ribosomal subunit. Contacts protein L32.

This Bordetella parapertussis (strain 12822 / ATCC BAA-587 / NCTC 13253) protein is Large ribosomal subunit protein bL17.